The sequence spans 122 residues: Large ribosomal subunit protein uL14 (122 aa).

It belongs to the universal ribosomal protein uL14 family. In terms of assembly, part of the 50S ribosomal subunit. Forms a cluster with proteins L3 and L19. In the 70S ribosome, L14 and L19 interact and together make contacts with the 16S rRNA in bridges B5 and B8.

In terms of biological role, binds to 23S rRNA. Forms part of two intersubunit bridges in the 70S ribosome. The protein is Large ribosomal subunit protein uL14 of Ureaplasma parvum serovar 3 (strain ATCC 27815 / 27 / NCTC 11736).